The primary structure comprises 512 residues: Histidine ammonia-lyase (512 aa).

Positions 146 to 148 (ASG) form a cross-link, 5-imidazolinone (Ala-Gly). S147 bears the 2,3-didehydroalanine (Ser) mark.

It belongs to the PAL/histidase family. In terms of processing, contains an active site 4-methylidene-imidazol-5-one (MIO), which is formed autocatalytically by cyclization and dehydration of residues Ala-Ser-Gly.

It is found in the cytoplasm. The enzyme catalyses L-histidine = trans-urocanate + NH4(+). It participates in amino-acid degradation; L-histidine degradation into L-glutamate; N-formimidoyl-L-glutamate from L-histidine: step 1/3. This is Histidine ammonia-lyase from Paracidovorax citrulli (strain AAC00-1) (Acidovorax citrulli).